The following is a 146-amino-acid chain: Large ribosomal subunit protein bL21 (146 aa).

Residues 95 to 104 (PKKKTRRKMG) show a composition bias toward basic residues. The interval 95-146 (PKKKTRRKMGHRQELTRVMVKSISISKSTPKSSPKTEATKKSTSSKASKPEN) is disordered. The span at 115–146 (KSISISKSTPKSSPKTEATKKSTSSKASKPEN) shows a compositional bias: low complexity.

The protein belongs to the bacterial ribosomal protein bL21 family. Part of the 50S ribosomal subunit. Contacts protein L20.

In terms of biological role, this protein binds to 23S rRNA in the presence of protein L20. The polypeptide is Large ribosomal subunit protein bL21 (Prochlorococcus marinus (strain MIT 9515)).